Reading from the N-terminus, the 167-residue chain is Leptin (167 aa).

Residues 1–21 form the signal peptide; the sequence is MHWGTLCGFLWLWPYLFYVQA. Cysteines 117 and 167 form a disulfide.

It belongs to the leptin family. As to quaternary structure, interacts with SIGLEC6. Adipose tissue is the main source of leptin. It is also produced by other peripheral tissues such as the skeletal muscle. Expressed by intercalated and striated tracts of submandibular and parotid salivary gland intralobular ducts. Detected by fundic epithelium of the gastric mucosa. Secreted into blood and gastric juice.

It localises to the secreted. Functionally, key player in the regulation of energy balance and body weight control. Once released into the circulation, has central and peripheral effects by binding LEPR, found in many tissues, which results in the activation of several major signaling pathways. In the hypothalamus, acts as an appetite-regulating factor that induces a decrease in food intake and an increase in energy consumption by inducing anorexinogenic factors and suppressing orexigenic neuropeptides, also regulates bone mass and secretion of hypothalamo-pituitary-adrenal hormones. In the periphery, increases basal metabolism, influences reproductive function, regulates pancreatic beta-cell function and insulin secretion, is pro-angiogenic for endothelial cell and affects innate and adaptive immunity. In the arcuate nucleus of the hypothalamus, activates by depolarization POMC neurons inducing FOS and SOCS3 expression to release anorexigenic peptides and inhibits by hyperpolarization NPY neurons inducing SOCS3 with a consequent reduction on release of orexigenic peptides. In addition to its known satiety inducing effect, has a modulatory role in nutrient absorption. In the intestine, reduces glucose absorption by enterocytes by activating PKC and leading to a sequential activation of p38, PI3K and ERK signaling pathways which exerts an inhibitory effect on glucose absorption. Acts as a growth factor on certain tissues, through the activation of different signaling pathways increases expression of genes involved in cell cycle regulation such as CCND1, via JAK2-STAT3 pathway, or VEGFA, via MAPK1/3 and PI3K-AKT1 pathways. May also play an apoptotic role via JAK2-STAT3 pathway and up-regulation of BIRC5 expression. Pro-angiogenic, has mitogenic activity on vascular endothelial cells and plays a role in matrix remodeling by regulating the expression of matrix metalloproteinases (MMPs) and tissue inhibitors of metalloproteinases (TIMPs). In innate immunity, modulates the activity and function of neutrophils by increasing chemotaxis and the secretion of oxygen radicals. Increases phagocytosis by macrophages and enhances secretion of pro-inflammatory mediators. Increases cytotoxic ability of NK cells. Plays a pro-inflammatory role, in synergy with IL1B, by inducing NOS2 which promotes the production of IL6, IL8 and Prostaglandin E2, through a signaling pathway that involves JAK2, PI3K, MAP2K1/MEK1 and MAPK14/p38. In adaptive immunity, promotes the switch of memory T-cells towards T helper-1 cell immune responses. Increases CD4(+)CD25(-) T-cell proliferation and reduces autophagy during TCR (T-cell receptor) stimulation, through MTOR signaling pathway activation and BCL2 up-regulation. This Homo sapiens (Human) protein is Leptin.